The sequence spans 395 residues: MKGSLLLAGATLLGCTSAKLHSLKLKKVSLKEQLEHADIDVQIKSLGQKYMGIRPGQHEQQMFKEQTPIEAESGHNVLIDNFLNAQYFSEISIGTPPQTFKVVLDTGSSNLWVPGKDCSSIACFLHSTYDSSASSTFTRNGTSFAIRYGSGSLEGFVSQDNVQIGDMKIKNQLFAEATSEPGLAFAFGRFDGILGMGYDTISVNKITPPFYKMVEQGLVDEPVFSFYLGDTNKDGDQSVVTFGGADKSHYTGDITTIPLRRKAYWEVEFNAITLGKDTATLDNTGIILDTGTSLIALPTTYAEMIISKSWNGQYTIDCAKRDSLPDLTFTLSGHNFTIGPYDYTLEVSGTCISSFMGMDFPEPVGPLAILGDSFLRRWYSVYDLGKGTVGLAKAK.

An N-terminal signal peptide occupies residues 1 to 18; that stretch reads MKGSLLLAGATLLGCTSA. Residues 19-72 constitute a propeptide, activation peptide; it reads KLHSLKLKKVSLKEQLEHADIDVQIKSLGQKYMGIRPGQHEQQMFKEQTPIEAE. Positions 87–392 constitute a Peptidase A1 domain; it reads YFSEISIGTP…DLGKGTVGLA (306 aa). Residue D105 is part of the active site. A disulfide bond links C118 and C123. Residue N140 is glycosylated (N-linked (GlcNAc...) asparagine). D289 is a catalytic residue. A disulfide bond links C318 and C351. Residue N335 is glycosylated (N-linked (GlcNAc...) asparagine).

This sequence belongs to the peptidase A1 family.

It localises to the vacuole lumen. The protein localises to the secreted. The enzyme catalyses Hydrolysis of proteins with broad specificity for peptide bonds. Cleaves -Leu-Leu-|-Val-Tyr- bond in a synthetic substrate. Does not act on esters of Tyr or Arg.. In terms of biological role, vacuolar aspartic endopeptidase which is probably also secreted and contributes to virulence. This is Vacuolar protease A (PEP2) from Arthroderma otae (strain ATCC MYA-4605 / CBS 113480) (Microsporum canis).